The following is a 619-amino-acid chain: 1-deoxy-D-xylulose-5-phosphate synthase (619 aa).

Thiamine diphosphate-binding positions include His-80 and 121 to 123 (GHS). Residue Asp-152 participates in Mg(2+) binding. Thiamine diphosphate contacts are provided by residues 153 to 154 (GA), Asn-181, Tyr-288, and Glu-370. A Mg(2+)-binding site is contributed by Asn-181.

This sequence belongs to the transketolase family. DXPS subfamily. Homodimer. Requires Mg(2+) as cofactor. The cofactor is thiamine diphosphate.

It carries out the reaction D-glyceraldehyde 3-phosphate + pyruvate + H(+) = 1-deoxy-D-xylulose 5-phosphate + CO2. The protein operates within metabolic intermediate biosynthesis; 1-deoxy-D-xylulose 5-phosphate biosynthesis; 1-deoxy-D-xylulose 5-phosphate from D-glyceraldehyde 3-phosphate and pyruvate: step 1/1. Functionally, catalyzes the acyloin condensation reaction between C atoms 2 and 3 of pyruvate and glyceraldehyde 3-phosphate to yield 1-deoxy-D-xylulose-5-phosphate (DXP). The polypeptide is 1-deoxy-D-xylulose-5-phosphate synthase (Yersinia pseudotuberculosis serotype I (strain IP32953)).